The sequence spans 289 residues: Protease HtpX homolog (289 aa).

2 consecutive transmembrane segments (helical) span residues 9–29 and 31–51; these read TGVL…LIGG and GGMI…YWFS. H133 contributes to the Zn(2+) binding site. E134 is a catalytic residue. A Zn(2+)-binding site is contributed by H137. 2 helical membrane-spanning segments follow: residues 143-163 and 182-202; these read TLIQ…VDFA and IGLI…QLAI. E207 contributes to the Zn(2+) binding site.

The protein belongs to the peptidase M48B family. It depends on Zn(2+) as a cofactor.

The protein localises to the cell membrane. The protein is Protease HtpX homolog of Pyrococcus abyssi (strain GE5 / Orsay).